The following is a 118-amino-acid chain: Large ribosomal subunit protein bL19 (118 aa).

Belongs to the bacterial ribosomal protein bL19 family.

Its function is as follows. This protein is located at the 30S-50S ribosomal subunit interface and may play a role in the structure and function of the aminoacyl-tRNA binding site. The chain is Large ribosomal subunit protein bL19 from Campylobacter fetus subsp. fetus (strain 82-40).